The primary structure comprises 366 residues: MSAHRDAIRTARSVVVKIGTTALTTPTGVFDTSRLQDLADAIEARMKAGSDVVIVSSGAIAAGIEPLGLTKRPTDLATKQAAASVGQVALVNTWSSAFGRYHRTVGQVLLTAHDISMRVQHTNAQRTLDRLRALHAVAIVNENDTVATNEIRFGDNDRLSALVAHLVGADALILLSDVDGLYDSDPRKGNARFIPEVDGPDDLEGVTAGRGSHLGTGGMVSKLSSALLAADAGVPVLLAAASDAAAALDGASVGTVFAPRKERMSARRFWVRYAAEASGALTLDDGAVKAVVRQRRSLLPAGITALSGRFYGGDVVELRNQDATMVARGVVAYDAAELATMLGRSTSDLPAEMRRPAVHADDLVAV.

K17 lines the ATP pocket. 3 residues coordinate substrate: S57, D144, and N156. ATP contacts are provided by residues 176-177 and 216-222; these read SD and TGGMVSK. Positions 278 to 356 constitute a PUA domain; the sequence is SGALTLDDGA…SDLPAEMRRP (79 aa).

It belongs to the glutamate 5-kinase family.

The protein resides in the cytoplasm. The catalysed reaction is L-glutamate + ATP = L-glutamyl 5-phosphate + ADP. It functions in the pathway amino-acid biosynthesis; L-proline biosynthesis; L-glutamate 5-semialdehyde from L-glutamate: step 1/2. In terms of biological role, catalyzes the transfer of a phosphate group to glutamate to form L-glutamate 5-phosphate. The polypeptide is Glutamate 5-kinase (Mycolicibacterium vanbaalenii (strain DSM 7251 / JCM 13017 / BCRC 16820 / KCTC 9966 / NRRL B-24157 / PYR-1) (Mycobacterium vanbaalenii)).